The primary structure comprises 102 residues: NADH-quinone oxidoreductase subunit K (102 aa).

3 helical membrane-spanning segments follow: residues 5–25 (LGHF…GIFL), 31–51 (IVLL…FVAF), and 62–82 (VFVF…LAIL).

The protein belongs to the complex I subunit 4L family. NDH-1 is composed of 14 different subunits. Subunits NuoA, H, J, K, L, M, N constitute the membrane sector of the complex.

It localises to the cell inner membrane. It carries out the reaction a quinone + NADH + 5 H(+)(in) = a quinol + NAD(+) + 4 H(+)(out). Functionally, NDH-1 shuttles electrons from NADH, via FMN and iron-sulfur (Fe-S) centers, to quinones in the respiratory chain. The immediate electron acceptor for the enzyme in this species is believed to be ubiquinone. Couples the redox reaction to proton translocation (for every two electrons transferred, four hydrogen ions are translocated across the cytoplasmic membrane), and thus conserves the redox energy in a proton gradient. The chain is NADH-quinone oxidoreductase subunit K from Paracidovorax citrulli (strain AAC00-1) (Acidovorax citrulli).